The sequence spans 955 residues: Eukaryotic translation initiation factor 3 subunit C (955 aa).

2 disordered regions span residues 1-22 (MSRFFAGGSDSDSDSSSDSEPV) and 157-299 (RAAP…EEGW). Positions 162 to 183 (DFAEEEEDDEREDEKGSDEEEE) are enriched in acidic residues. The span at 206-218 (VKPVADSDSSDWG) shows a compositional bias: low complexity. A compositionally biased stretch (acidic residues) spans 219-229 (SDSDSDSTSSD). The segment covering 230–250 (EDAKYTSIRDRFLKKPEKGTE) has biased composition (basic and acidic residues). Positions 288-297 (MFDENEEEEE) are enriched in acidic residues. The 177-residue stretch at 658–834 (FHMHINLELL…ETIVMHRSEP (177 aa)) folds into the PCI domain. The disordered stretch occupies residues 865–955 (NFFQRGGNQG…RNVEYQNKAE (91 aa)). The segment covering 882–894 (YRNQNQNQNWNNN) has biased composition (low complexity). Residues 911-955 (GEGREQREHHRDHHRDQREHREHQNREFREQREQMRNVEYQNKAE) show a composition bias toward basic and acidic residues.

The protein belongs to the eIF-3 subunit C family. Component of the eukaryotic translation initiation factor 3 (eIF-3) complex.

The protein resides in the cytoplasm. Component of the eukaryotic translation initiation factor 3 (eIF-3) complex, which is involved in protein synthesis of a specialized repertoire of mRNAs and, together with other initiation factors, stimulates binding of mRNA and methionyl-tRNAi to the 40S ribosome. The eIF-3 complex specifically targets and initiates translation of a subset of mRNAs involved in cell proliferation. This Anopheles gambiae (African malaria mosquito) protein is Eukaryotic translation initiation factor 3 subunit C.